We begin with the raw amino-acid sequence, 208 residues long: Small ribosomal subunit protein uS4 (208 aa).

The region spanning 98-161 (RRLDNTIYRL…RQSPIILEAQ (64 aa)) is the S4 RNA-binding domain.

This sequence belongs to the universal ribosomal protein uS4 family. In terms of assembly, part of the 30S ribosomal subunit. Contacts protein S5. The interaction surface between S4 and S5 is involved in control of translational fidelity.

One of the primary rRNA binding proteins, it binds directly to 16S rRNA where it nucleates assembly of the body of the 30S subunit. In terms of biological role, with S5 and S12 plays an important role in translational accuracy. The polypeptide is Small ribosomal subunit protein uS4 (Solidesulfovibrio magneticus (strain ATCC 700980 / DSM 13731 / RS-1) (Desulfovibrio magneticus)).